The following is a 71-amino-acid chain: Small ribosomal subunit protein bS21 (71 aa).

The disordered stretch occupies residues 39–71 (EKPTQERKRKAAAAVKRQLRRSSRDVTKRQRLY). Residues 45-59 (RKRKAAAAVKRQLRR) are compositionally biased toward basic residues. Basic and acidic residues predominate over residues 60–71 (SSRDVTKRQRLY).

This sequence belongs to the bacterial ribosomal protein bS21 family.

The sequence is that of Small ribosomal subunit protein bS21 from Stenotrophomonas maltophilia (strain K279a).